The sequence spans 476 residues: Glycogen synthase (476 aa).

An ADP-alpha-D-glucose-binding site is contributed by K15.

This sequence belongs to the glycosyltransferase 1 family. Bacterial/plant glycogen synthase subfamily.

It carries out the reaction [(1-&gt;4)-alpha-D-glucosyl](n) + ADP-alpha-D-glucose = [(1-&gt;4)-alpha-D-glucosyl](n+1) + ADP + H(+). Its pathway is glycan biosynthesis; glycogen biosynthesis. Synthesizes alpha-1,4-glucan chains using ADP-glucose. The chain is Glycogen synthase from Chlamydia pneumoniae (Chlamydophila pneumoniae).